The following is a 333-amino-acid chain: MDSSNRTRVSEFLLLGFVENKDLQPLIYGLFLSMYLVTVIGNISIIVAIISDPCLHTPMYFFLSNLSFVDICFISTTVPKMLVNIQTQNNVITYAGCITQIYFFLLFVELDNFLLTIMAYDRYVAICHPMHYTVIMNYKLCGFLVLVSWIVSVLHALFQSLMMLALPFCTHLEIPHYFCEPNQVIQLTCSDAFLNDLVIYFTLVLLATVPLAGIFYSYFKIVSSICAISSVHGKYKAFSTCASHLSVVSLFYCTGLGVYLSSAANNSSQASATASVMYTVVTPMVNPFIYSLRNKDVKSVLKKTLCEEVIRSPPSLLHFFLVLCHLPCFIFCY.

Over 1 to 25 (MDSSNRTRVSEFLLLGFVENKDLQP) the chain is Extracellular. Residue asparagine 5 is glycosylated (N-linked (GlcNAc...) asparagine). The chain crosses the membrane as a helical span at residues 26–50 (LIYGLFLSMYLVTVIGNISIIVAII). Topologically, residues 51 to 57 (SDPCLHT) are cytoplasmic. A helical transmembrane segment spans residues 58–79 (PMYFFLSNLSFVDICFISTTVP). At 80–100 (KMLVNIQTQNNVITYAGCITQ) the chain is on the extracellular side. A disulfide bond links cysteine 97 and cysteine 189. The chain crosses the membrane as a helical span at residues 101–120 (IYFFLLFVELDNFLLTIMAY). Topologically, residues 121–139 (DRYVAICHPMHYTVIMNYK) are cytoplasmic. The chain crosses the membrane as a helical span at residues 140 to 158 (LCGFLVLVSWIVSVLHALF). Residues 159–196 (QSLMMLALPFCTHLEIPHYFCEPNQVIQLTCSDAFLND) are Extracellular-facing. The chain crosses the membrane as a helical span at residues 197-219 (LVIYFTLVLLATVPLAGIFYSYF). Over 220–236 (KIVSSICAISSVHGKYK) the chain is Cytoplasmic. The chain crosses the membrane as a helical span at residues 237 to 260 (AFSTCASHLSVVSLFYCTGLGVYL). The Extracellular portion of the chain corresponds to 261-272 (SSAANNSSQASA). The helical transmembrane segment at 273 to 292 (TASVMYTVVTPMVNPFIYSL) threads the bilayer. Topologically, residues 293 to 333 (RNKDVKSVLKKTLCEEVIRSPPSLLHFFLVLCHLPCFIFCY) are cytoplasmic.

It belongs to the G-protein coupled receptor 1 family. Olfactory epithelium.

It localises to the cell membrane. Its function is as follows. Odorant receptor. The chain is Olfactory receptor 1078 (Olr1078) from Rattus norvegicus (Rat).